The chain runs to 1733 residues: MTAVVNGNSKRYSWWWDSHISPKNSKWLQENLTDMDSKVKQMIKVIEEDADSFARRAEMYYKKRPELMKLVEEFYRAYRALAERYDHATGVIRHAQQTMAEAFPNQDPMMFGEESPLGSSTDGFDPQTPDSYPPIRAPVYPDDLRKGAFGISSSHLSTVKRNIAFMEDPQSVSSGKGFKTAKARKGLNFNNVDGKEINAKVLSESERASKAEAEIVALKDALSKVQAEKEASLAQFDQNLEKLSNLESEVSRAQEDSRVLIERATRAEAEVETLRESLSKVEVEKESSLLQYQQCLQNIADLEDRISLAQKEAGEVDERANRAEAETLALKQSLVSSETDKEAALVQYQQCLKTISNLEERLHKAEEDSRLTNQRAENAEGEVESLKQKVSKLIEENEAYELQYQQCLDTIADLKLKLFHAQEETQRLSREIEDGVAKLKFAEEKCVVLERSNQNLHSELDGLLEKLGNQSHELTEKQKELGRLWTCVQEENLRFMEAETAFQTLQQLHSQSQEELSTLALELQNRSQILKDMEARNNGLQEEVQEAKDQSKSLNELNLSSAASIKSLQEEVSKLRETIQKLEAEVELRVDQRNALQQEIYCLKEELSQIGKKHQSMVEQVELVGLHPESFGSSVKELQEENSKLKEIRERESIEKTALIEKLEMMEKLVQKNLLLENSISDLNAELETIRGKLKTLEEASMSLAEEKSGLHSEKDMLISRLQSATENSKKLSEENMVLENSLFNANVELEELKSKLKSLEESCHLLNDDKTTLTSERESLLSHIDTMRKRIEDLEKEHAELKVKVLELATERESSLQKIEELGVSLNAKDCEYASFVQFSESRMNGMESTIHHLQDENQCRVREYQVELDRAHDAHIEIIVLQKCLQDWLEKSSSLIAENQDIKEASKLLEKLVSELEEENIGKQVQIDSSINCIKILRTGIYQVLMKLEIIPGIGSGDENSRDQRNMHDILNRLEDMQTMLLSIRDENQHSAIENLVLIEFLRQLKSEAVGIETEKKILEEELESQCQQLSFSRDETQKLIFVNGELTTKVNQGVNREKVLMVEIEDFHRQVLQLRDDYTILQGDNNKTLDEKAYLTKSTLQLEEEKCKLEDDISLLLSETIYQSNLIILLEDVILEKLSGAMKLNEDLDRLSIVKCKLEEEVRELGDKLKSADIANFQLQVVLEKSNAELLSARSANVHLEHEIANVKVQKEKELLEAMLMISIMQNEKSELSKAVEGLECRYKEAKAIEEDRDKQVLRLRGDYDEQVKKNSHSNEANLKLEADLMNLLMELEEIKVEKENLNQELFTERNEIELWESQSATLFGELQISAVHETLLEGLTNELVEACKNLESRSTLKDREIEQLKGRVNNLEDANKGQNDLMCKYAQAIFLLKESIQSLEKHAMLHEFENGPATETASLVDNSDGFLEIQELHLRIKAIEEAITKKLAMEELKTSSARRSRRRNGSLRKQNHEIYSEETEMITKDIVLDQVSDCSSYGISTRDILKIEDDHSLEAKSQNPPKGKSLSEESLVVDKLEISDRFTDPNKDANKRKVLERLNSDLQKLSNLHVAVEDLKIKVETEEKDEKGKENEYETIKGQINEAEEALEKLLSINRKLVTKVQNGFERSDGSKSSMDLDENESSRRRRISEQARRGSEKIGRLQLEIQRLQFLLLKLEGDREDRAKAKISDSKTRILLRDYIYSGVRGERRKRIKKRFAFCGCVQPPPSP.

Positions 12 to 92 constitute an NAB domain; that stretch reads YSWWWDSHIS…ERYDHATGVI (81 aa). Coiled-coil stretches lie at residues 195 to 816, 897 to 931, 960 to 1043, and 1196 to 1386; these read KEIN…RESS, LIAENQDIKEASKLLEKLVSELEEENIGKQVQIDS, DENS…QKLI, and ARSA…NDLM. The tract at residues 1456 to 1476 is disordered; the sequence is LKTSSARRSRRRNGSLRKQNH. Basic residues predominate over residues 1460–1470; the sequence is SARRSRRRNGS. Coiled coils occupy residues 1553 to 1627 and 1653 to 1686; these read ANKR…KVQN and SEQARRGSEKIGRLQLEIQRLQFLLLKLEGDRED. A disordered region spans residues 1628–1656; it reads GFERSDGSKSSMDLDENESSRRRRISEQA.

It belongs to the NET family.

In terms of biological role, plant-specific actin binding protein. May be part of a membrane-cytoskeletal adapter complex. The sequence is that of Protein NETWORKED 1D from Arabidopsis thaliana (Mouse-ear cress).